Here is a 915-residue protein sequence, read N- to C-terminus: Protein inturned (915 aa).

A disordered region spans residues Asn88 to Val144. Residues Lys104–Gln118 are compositionally biased toward basic residues. Positions Gln128–Gly139 are enriched in polar residues. The 89-residue stretch at Ser165–Thr253 folds into the PDZ domain. The interval Gly688–Lys738 is disordered.

Belongs to the inturned family.

The protein resides in the cytoplasm. The protein localises to the cell surface. It is found in the cytoskeleton. Its subcellular location is the cilium basal body. Functionally, plays a key role in ciliogenesis and embryonic development. Regulator of cilia formation by controlling the organization of the apical actin cytoskeleton and the positioning of the basal bodies at the apical cell surface, which in turn is essential for the normal orientation of elongating ciliary microtubules. Plays a key role in definition of cell polarity via its role in ciliogenesis but not via conversion extension. Has an indirect effect on hedgehog signaling. In Danio rerio (Zebrafish), this protein is Protein inturned (intu).